Here is a 143-residue protein sequence, read N- to C-terminus: Transcription antitermination protein NusB (143 aa).

The protein belongs to the NusB family.

In terms of biological role, involved in transcription antitermination. Required for transcription of ribosomal RNA (rRNA) genes. Binds specifically to the boxA antiterminator sequence of the ribosomal RNA (rrn) operons. This chain is Transcription antitermination protein NusB, found in Buchnera aphidicola subsp. Acyrthosiphon pisum (strain 5A).